The chain runs to 142 residues: Large ribosomal subunit protein uL13 (142 aa).

The protein belongs to the universal ribosomal protein uL13 family. Part of the 50S ribosomal subunit.

Functionally, this protein is one of the early assembly proteins of the 50S ribosomal subunit, although it is not seen to bind rRNA by itself. It is important during the early stages of 50S assembly. The chain is Large ribosomal subunit protein uL13 from Xylella fastidiosa (strain 9a5c).